A 370-amino-acid chain; its full sequence is Cytochrome b (370 aa).

4 consecutive transmembrane segments (helical) span residues 25 to 45 (FGSMLLTCLLLQIMTGFFLAI), 69 to 90 (WIMQNIHAIGASLFFICIYIHI), 105 to 125 (WLSGTALLITLMATAFFGYVL), and 170 to 190 (FFALHFILPFAIISLSSIHII). 2 residues coordinate heme b: His-75 and His-89. Heme b is bound by residues His-174 and His-188. His-193 contributes to the a ubiquinone binding site. 4 helical membrane-spanning segments follow: residues 218 to 238 (YKDMLMITIMITMLFITMSFT), 280 to 300 (LGGTMALIMSVAILITVPFTH), 312 to 332 (LTQILFWTLISTFIIITWTAT), and 339 to 358 (FISISQMTSIIYFSFFIINP).

It belongs to the cytochrome b family. As to quaternary structure, the cytochrome bc1 complex contains 3 respiratory subunits (MT-CYB, CYC1 and UQCRFS1), 2 core proteins (UQCRC1 and UQCRC2) and probably 6 low-molecular weight proteins. Heme b serves as cofactor.

It localises to the mitochondrion inner membrane. Its function is as follows. Component of the ubiquinol-cytochrome c reductase complex (complex III or cytochrome b-c1 complex) that is part of the mitochondrial respiratory chain. The b-c1 complex mediates electron transfer from ubiquinol to cytochrome c. Contributes to the generation of a proton gradient across the mitochondrial membrane that is then used for ATP synthesis. The protein is Cytochrome b (MT-CYB) of Bungarus fasciatus (Banded krait).